The sequence spans 91 residues: MKIRAMVTVKGMVQGVNFRRYTQQTAMRFNVSGWVKNLPNGSVAGCFEGEENDVAALIDWCRQGPGSARVSGVEVERGEFTGEFDDFHIAY.

An Acylphosphatase-like domain is found at 4–91; it reads RAMVTVKGMV…GEFDDFHIAY (88 aa). Catalysis depends on residues R19 and N37.

Belongs to the acylphosphatase family.

The enzyme catalyses an acyl phosphate + H2O = a carboxylate + phosphate + H(+). The chain is Acylphosphatase (acyP) from Geotalea uraniireducens (strain Rf4) (Geobacter uraniireducens).